A 241-amino-acid polypeptide reads, in one-letter code: Phosphoribosyl isomerase A (241 aa).

Asp-11 acts as the Proton acceptor in catalysis. Asp-130 functions as the Proton donor in the catalytic mechanism.

It belongs to the HisA/HisF family.

It is found in the cytoplasm. The catalysed reaction is 1-(5-phospho-beta-D-ribosyl)-5-[(5-phospho-beta-D-ribosylamino)methylideneamino]imidazole-4-carboxamide = 5-[(5-phospho-1-deoxy-D-ribulos-1-ylimino)methylamino]-1-(5-phospho-beta-D-ribosyl)imidazole-4-carboxamide. The enzyme catalyses N-(5-phospho-beta-D-ribosyl)anthranilate = 1-(2-carboxyphenylamino)-1-deoxy-D-ribulose 5-phosphate. The protein operates within amino-acid biosynthesis; L-histidine biosynthesis; L-histidine from 5-phospho-alpha-D-ribose 1-diphosphate: step 4/9. It functions in the pathway amino-acid biosynthesis; L-tryptophan biosynthesis; L-tryptophan from chorismate: step 3/5. Involved in both the histidine and tryptophan biosynthetic pathways. The protein is Phosphoribosyl isomerase A of Streptomyces griseus subsp. griseus (strain JCM 4626 / CBS 651.72 / NBRC 13350 / KCC S-0626 / ISP 5235).